Consider the following 727-residue polypeptide: MSDEKKCPVTGRTSSQVAGSGTSNKDWWPNQLNLNILHQHSAKSDPMGKDFNYAEEFKKLDLEALKKDLFELMTDSQDWWPADYGHYGPFFIRMAWHSAGTYRIGDGRGGAGSGSQRLAPLNSWPDNVNLDKARRLLWPIKKKYGRKISWADLMIFAGNCAIESMGLKPFGFAGGREDIWEPEEDIYWGDEDTWLGDTRYSGDRKLDNPLAAVQMGLIYVNPEGPNGDPNAVASGKDVRETFARMAMNDEETVALVAGGHTFGKCHGAGDAANVGPDPEGAPIEQQGLGWKSKFGSGKGGDTISSGIEGAWTPTPIKWDNSYFDTLFGYEWNLEKSPAGAWQWHPSDPEAKKAVPDAHDPSKTHPPMMTTADLSLRMDPIYAPIAKRFHENPEEFADAFARAWFKLTHRDMGPRARYLGSMVPDEELIWQDPVPAVDHELIDNTEIADLKAKILASGLSISKLVSAAWASASTYRDSDKRGGSNGARIRLAPQKDWYVNQPLQLPELLNKLEEIQQHFNSKSGNKKVSLADLIVLGGCAAVEQGAKNAGFDVTVPFTPGRTDASQEQTDVHSFAVLEPAADGFRNYQKVKYSVTPEELLVDKAQLMTLTAPEMTVLIGGMRVLDANFDGSKHGVFTDKPGSLNNDFFSNLLDMDTVWTSTSEDAELFEGRDRESGELKWSATRIDLIFGANSQLRAIAEVYGCEDSGEKFVNDFISAWDKVMNLGIF.

Residues Met-1–Asp-26 form a disordered region. Positions Gly-11 to Asp-26 are enriched in polar residues. The segment at residues Trp-96–Tyr-219 is a cross-link (tryptophyl-tyrosyl-methioninium (Trp-Tyr) (with M-245)). His-97 acts as the Proton acceptor in catalysis. The segment at residues Tyr-219–Met-245 is a cross-link (tryptophyl-tyrosyl-methioninium (Tyr-Met) (with W-96)). Residue His-260 coordinates heme b. The span at Ser-346–Lys-362 shows a compositional bias: basic and acidic residues. The tract at residues Ser-346 to Pro-365 is disordered.

It belongs to the peroxidase family. Peroxidase/catalase subfamily. In terms of assembly, homodimer or homotetramer. Heme b is required as a cofactor. In terms of processing, formation of the three residue Trp-Tyr-Met cross-link is important for the catalase, but not the peroxidase activity of the enzyme.

It catalyses the reaction H2O2 + AH2 = A + 2 H2O. The catalysed reaction is 2 H2O2 = O2 + 2 H2O. Its function is as follows. Bifunctional enzyme with both catalase and broad-spectrum peroxidase activity. This Maridesulfovibrio salexigens (strain ATCC 14822 / DSM 2638 / NCIMB 8403 / VKM B-1763) (Desulfovibrio salexigens) protein is Catalase-peroxidase.